Reading from the N-terminus, the 375-residue chain is N-acetylneuraminate epimerase (375 aa).

An N-terminal signal peptide occupies residues 1–22; the sequence is MKLTKTALCTALFATFTFSANA. 7 Kelch repeats span residues 43 to 87, 89 to 140, 142 to 176, 177 to 222, 225 to 273, 295 to 344, and 346 to 375; these read TVYV…AAVD, KLYV…ASHG, KVYI…EIVA, AYFD…TIQG, LVVV…LAGA, KQFK…SYNN, and VLLI…LTVE. Residue E231 is the Proton acceptor of the active site.

Belongs to the NanM family. As to quaternary structure, homodimer.

It localises to the periplasm. It carries out the reaction N-acetyl-alpha-neuraminate = N-acetyl-beta-neuraminate. Its function is as follows. Converts alpha-N-acetylneuranimic acid (Neu5Ac) to the beta-anomer, accelerating the equilibrium between the alpha- and beta-anomers. Probably facilitates sialidase-negative bacteria to compete successfully for limited amounts of extracellular Neu5Ac, which is likely taken up in the beta-anomer. In addition, the rapid removal of sialic acid from solution might be advantageous to the bacterium to damp down host responses. This chain is N-acetylneuraminate epimerase, found in Haemophilus influenzae (strain 86-028NP).